Here is a 50-residue protein sequence, read N- to C-terminus: Toxic protein HokC (50 aa).

Topologically, residues 1–5 (MKQHK) are cytoplasmic. Residues 6–24 (AMIVALIVICITAVVAALV) form a helical; Signal-anchor for type II membrane protein membrane-spanning segment. Residues 25-50 (TRKDLCEVHIRTGQTEVAVFTAYESE) are Periplasmic-facing.

This sequence belongs to the Hok/Gef family. As to quaternary structure, homodimer; disulfide-linked.

The protein localises to the cell inner membrane. Its function is as follows. Toxic component of a type I toxin-antitoxin (TA) system. When overexpressed kills cells within minutes; causes collapse of the transmembrane potential and arrest of respiration. Its toxic effect is probably neutralized by antisense antitoxin RNA SokC. This chain is Toxic protein HokC, found in Escherichia coli (strain K12).